Here is a 327-residue protein sequence, read N- to C-terminus: Prenyl transferase janC (327 aa).

Residues 3–23 form a helical membrane-spanning segment; that stretch reads FPGAGPILGAIAVSSCLYFLF. Residues Lys-63 and His-96 each coordinate isopentenyl diphosphate. Mg(2+) is bound by residues Asp-103 and Asp-107. Residues Arg-112 and Lys-196 each coordinate dimethylallyl diphosphate. Asn-211 is a glycosylation site (N-linked (GlcNAc...) asparagine).

The protein belongs to the FPP/GGPP synthase family.

It is found in the membrane. It participates in secondary metabolite biosynthesis. In terms of biological role, prenyl transferase; part of the gene cluster that mediates the biosynthesis of the indole diterpenes janthitremanes such as shearinine K or shearinine A. The geranylgeranyl diphosphate (GGPP) synthase janG catalyzes the first step in janthitremane biosynthesis via conversion of farnesyl pyrophosphate and isopentyl pyrophosphate into geranylgeranyl pyrophosphate (GGPP). Condensation of indole-3-glycerol phosphate with GGPP by the prenyl transferase janC then forms 3-geranylgeranylindole (3-GGI). Epoxidation by the FAD-dependent monooxygenase janM leads to a epoxidized-GGI that is substrate of the terpene cyclase janB for cyclization to yield paspaline. Paspaline is subsequently converted to 13-desoxypaspaline by the cytochrome P450 monooxygenase janP, via beta-PC-M6 in a series of alpha-face oxidations. The cytochrome P450 monooxygenase janQ is proposed to carry out sequential beta-face oxidation steps at C-7 and C-13 of 13-desoxypaspaline to form paspalicine and paspalinine respectively. The indole diterpene prenyltransferase janD may then convert paspalinine into shearinine K which is substrate of janO and/or additional enzymes for oxidation and cyclization to generate shearinine A. In Penicillium janthinellum (Penicillium vitale), this protein is Prenyl transferase janC.